Here is a 101-residue protein sequence, read N- to C-terminus: Integration host factor subunit alpha (101 aa).

It belongs to the bacterial histone-like protein family. In terms of assembly, heterodimer of an alpha and a beta chain.

Its function is as follows. This protein is one of the two subunits of integration host factor, a specific DNA-binding protein that functions in genetic recombination as well as in transcriptional and translational control. This chain is Integration host factor subunit alpha, found in Alkalilimnicola ehrlichii (strain ATCC BAA-1101 / DSM 17681 / MLHE-1).